A 737-amino-acid chain; its full sequence is Polyribonucleotide nucleotidyltransferase (737 aa).

Positions 489 and 495 each coordinate Mg(2+). Residues Pro-556–Ile-615 enclose the KH domain. One can recognise an S1 motif domain in the interval Asp-625 to Lys-693. Residues Ser-691–Glu-737 form a disordered region. A compositionally biased stretch (basic and acidic residues) spans Pro-700–Pro-714. Basic residues predominate over residues His-715–Lys-724. Residues Pro-725–Glu-737 are compositionally biased toward basic and acidic residues.

This sequence belongs to the polyribonucleotide nucleotidyltransferase family. Requires Mg(2+) as cofactor.

The protein resides in the cytoplasm. It catalyses the reaction RNA(n+1) + phosphate = RNA(n) + a ribonucleoside 5'-diphosphate. Involved in mRNA degradation. Catalyzes the phosphorolysis of single-stranded polyribonucleotides processively in the 3'- to 5'-direction. This is Polyribonucleotide nucleotidyltransferase from Streptococcus pneumoniae serotype 19F (strain G54).